A 344-amino-acid polypeptide reads, in one-letter code: S-methyl-5'-thioadenosine phosphorylase (344 aa).

Residues Thr45, Arg88 to His89, and Ser121 to Ala122 contribute to the phosphate site. Met238 lines the substrate pocket. Phosphate is bound at residue Ser239. Asp262–Asp264 provides a ligand contact to substrate.

Belongs to the PNP/MTAP phosphorylase family. MTAP subfamily. As to quaternary structure, homotrimer.

The protein resides in the cytoplasm. It is found in the nucleus. The catalysed reaction is S-methyl-5'-thioadenosine + phosphate = 5-(methylsulfanyl)-alpha-D-ribose 1-phosphate + adenine. Its pathway is amino-acid biosynthesis; L-methionine biosynthesis via salvage pathway; S-methyl-5-thio-alpha-D-ribose 1-phosphate from S-methyl-5'-thioadenosine (phosphorylase route): step 1/1. Catalyzes the reversible phosphorylation of S-methyl-5'-thioadenosine (MTA) to adenine and 5-methylthioribose-1-phosphate. Involved in the breakdown of MTA, a major by-product of polyamine biosynthesis. Responsible for the first step in the methionine salvage pathway after MTA has been generated from S-adenosylmethionine. Has broad substrate specificity with 6-aminopurine nucleosides as preferred substrates. In Candida albicans (strain WO-1) (Yeast), this protein is S-methyl-5'-thioadenosine phosphorylase.